We begin with the raw amino-acid sequence, 284 residues long: MKKIQAGTVGIGLRHPHYQTLLDQLPTLGFLEVHSENYFNPHSQNRFYLEQIAAHYPLSFHGIGLSIGSSEDISKTHLQNLKQIIDIFQPVLVSDHISWSSLQSNFFNDLLPIPYTKKALSCFVNNLNQTQEHLQRQILIENPSSYLEYNDSEMSEPEFINEIVKQTGCGLLLDLNNVYVSATNHQFSVEKYLDIIDHTTVQEIHLAGFTQKQVNNSTMLIDTHSTLISQSVWDIYQTYMSTKKTDALTLIEWDLDIPKLGTLIEEHNKAINIKQSLCTSDKHV.

The protein belongs to the UPF0276 family.

This chain is UPF0276 protein Ping_0944, found in Psychromonas ingrahamii (strain DSM 17664 / CCUG 51855 / 37).